The following is a 364-amino-acid chain: Histidinol-phosphate aminotransferase BQ2027_MB2256C (364 aa).

Lys220 carries the post-translational modification N6-(pyridoxal phosphate)lysine.

It belongs to the class-I pyridoxal-phosphate-dependent aminotransferase family. As to quaternary structure, monomer. Pyridoxal 5'-phosphate serves as cofactor.

Its subcellular location is the secreted. It localises to the cell wall. The catalysed reaction is L-histidinol phosphate + 2-oxoglutarate = 3-(imidazol-4-yl)-2-oxopropyl phosphate + L-glutamate. Its function is as follows. Aminotransferase that catalyzes the conversion of histidinol phosphate and 2-oxoglutarate into L-glutamate and imidazole acetol phosphate. Might play a significant role in mediating histidine biosynthesis during infection. Facilitates mycobacterial survival and virulence in macrophages. This is Histidinol-phosphate aminotransferase BQ2027_MB2256C from Mycobacterium bovis (strain ATCC BAA-935 / AF2122/97).